A 350-amino-acid polypeptide reads, in one-letter code: Eukaryotic translation initiation factor 3 subunit I (350 aa).

6 WD repeats span residues 8 to 49 (GHER…GTLE), 51 to 89 (HQGV…CVYT), 91 to 135 (NSPS…ASLT), 149 to 190 (QNGS…KSLQ), 198 to 240 (EKNV…KVYK), and 296 to 335 (GHFG…KDFL).

The protein belongs to the eIF-3 subunit I family. Component of the eukaryotic translation initiation factor 3 (eIF-3) complex.

Its subcellular location is the cytoplasm. Functionally, component of the eukaryotic translation initiation factor 3 (eIF-3) complex, which is involved in protein synthesis of a specialized repertoire of mRNAs and, together with other initiation factors, stimulates binding of mRNA and methionyl-tRNAi to the 40S ribosome. The eIF-3 complex specifically targets and initiates translation of a subset of mRNAs involved in cell proliferation. The chain is Eukaryotic translation initiation factor 3 subunit I from Lodderomyces elongisporus (strain ATCC 11503 / CBS 2605 / JCM 1781 / NBRC 1676 / NRRL YB-4239) (Yeast).